A 253-amino-acid polypeptide reads, in one-letter code: Phosphate import ATP-binding protein PstB (253 aa).

Residues 7–248 enclose the ABC transporter domain; it reads IDARDVNFWY…PEKEATQNYI (242 aa). Position 39–46 (39–46) interacts with ATP; that stretch reads GPSGCGKS.

This sequence belongs to the ABC transporter superfamily. Phosphate importer (TC 3.A.1.7) family. In terms of assembly, the complex is composed of two ATP-binding proteins (PstB), two transmembrane proteins (PstC and PstA) and a solute-binding protein (PstS).

Its subcellular location is the cell inner membrane. It catalyses the reaction phosphate(out) + ATP + H2O = ADP + 2 phosphate(in) + H(+). In terms of biological role, part of the ABC transporter complex PstSACB involved in phosphate import. Responsible for energy coupling to the transport system. In Bacteroides fragilis (strain ATCC 25285 / DSM 2151 / CCUG 4856 / JCM 11019 / LMG 10263 / NCTC 9343 / Onslow / VPI 2553 / EN-2), this protein is Phosphate import ATP-binding protein PstB.